We begin with the raw amino-acid sequence, 351 residues long: MTIAVGRAPSRGWFDVLDDWLKRDRFVFVGWSGILLFPCAFLALGGWLTGTTFVTSWYTHGLASSYLEGANFLTVAVSTPADSMGHSLLLLWGPEAQGDLTRWFQLGGLWPFVALHGAFGLIGFMLRQFEIARLVGIRPYNALAFSAPIAVFVSVFLMYPLGQSSWFFAPSFGVAAIFRFLLFLQGFHNWTLNPFHMMGVAGVLGGALLCAIHGATVENTLFEDGDGANTFRAFNPTQSEETYSMVTANRFWSQIFGIAFSNKRWLHFFMLFVPVTGLWMSAVGIVGLALNLRAYDFVSQELRAAEDPEFETFYTKNILLNEGIRAWMAPQDQPHEQFVFPEEVLPRGNAL.

A helical membrane pass occupies residues 39–59 (CAFLALGGWLTGTTFVTSWYT). His116 contributes to the chlorophyll a binding site. Residues 123–139 (GFMLRQFEIARLVGIRP) form a helical membrane-spanning segment. Residues Gln128 and Asn141 each coordinate pheophytin a. Residues 151-164 (VFVSVFLMYPLGQS) form a helical membrane-spanning segment. Position 196 (His196) interacts with chlorophyll a. Residues 206 to 226 (GALLCAIHGATVENTLFEDGD) traverse the membrane as a helical segment. The a plastoquinone site is built by His213 and Phe260. Residue His213 participates in Fe cation binding. Fe cation is bound at residue His267. The chain crosses the membrane as a helical span at residues 277–293 (GLWMSAVGIVGLALNLR).

Belongs to the reaction center PufL/M/PsbA/D family. In terms of assembly, PSII is composed of 1 copy each of membrane proteins PsbA, PsbB, PsbC, PsbD, PsbE, PsbF, PsbH, PsbI, PsbJ, PsbK, PsbL, PsbM, PsbT, PsbX, PsbY, PsbZ, Psb30/Ycf12, peripheral proteins PsbO, CyanoQ (PsbQ), PsbU, PsbV and a large number of cofactors. It forms dimeric complexes. The cofactor is The D1/D2 heterodimer binds P680, chlorophylls that are the primary electron donor of PSII, and subsequent electron acceptors. It shares a non-heme iron and each subunit binds pheophytin, quinone, additional chlorophylls, carotenoids and lipids. There is also a Cl(-1) ion associated with D1 and D2, which is required for oxygen evolution. The PSII complex binds additional chlorophylls, carotenoids and specific lipids..

Its subcellular location is the cellular thylakoid membrane. It catalyses the reaction 2 a plastoquinone + 4 hnu + 2 H2O = 2 a plastoquinol + O2. Photosystem II (PSII) is a light-driven water:plastoquinone oxidoreductase that uses light energy to abstract electrons from H(2)O, generating O(2) and a proton gradient subsequently used for ATP formation. It consists of a core antenna complex that captures photons, and an electron transfer chain that converts photonic excitation into a charge separation. The D1/D2 (PsbA/PsbD) reaction center heterodimer binds P680, the primary electron donor of PSII as well as several subsequent electron acceptors. D2 is needed for assembly of a stable PSII complex. The polypeptide is Photosystem II D2 protein (Nostoc punctiforme (strain ATCC 29133 / PCC 73102)).